The following is a 156-amino-acid chain: Small ribosomal subunit protein uS7 (156 aa).

This sequence belongs to the universal ribosomal protein uS7 family. In terms of assembly, part of the 30S ribosomal subunit. Contacts proteins S9 and S11.

Functionally, one of the primary rRNA binding proteins, it binds directly to 16S rRNA where it nucleates assembly of the head domain of the 30S subunit. Is located at the subunit interface close to the decoding center, probably blocks exit of the E-site tRNA. The protein is Small ribosomal subunit protein uS7 of Paracoccus denitrificans (strain Pd 1222).